We begin with the raw amino-acid sequence, 282 residues long: Probable metal transport system membrane protein TM_0125 (282 aa).

9 consecutive transmembrane segments (helical) span residues 33–53 (AFVG…IVVF), 58–78 (FIGD…TLIG), 79–99 (ADHR…VSLF), 109–129 (AIGI…SVSG), 148–168 (STDV…TVVF), 184–204 (FYGI…AITV), 210–230 (VVGV…SKIF), 234–254 (FWSL…AGFL), and 259–279 (LDLP…LPML).

It belongs to the ABC-3 integral membrane protein family.

Its subcellular location is the cell inner membrane. Functionally, part of an ATP-driven transport system TM_0123/TM_0124/TM_0125 for a metal. This is Probable metal transport system membrane protein TM_0125 from Thermotoga maritima (strain ATCC 43589 / DSM 3109 / JCM 10099 / NBRC 100826 / MSB8).